The following is a 134-amino-acid chain: Histone H2A (134 aa).

Positions 1–10 (MTGGKSGGKA) are enriched in gly residues. The tract at residues 1-26 (MTGGKSGGKASGSKSSAQSRSSKAGL) is disordered. Lys-5 and Lys-9 each carry N6-acetyllysine. Residues 11 to 25 (SGSKSSAQSRSSKAG) are compositionally biased toward low complexity. Gln-107 carries the post-translational modification N5-methylglutamine. At Ser-131 the chain carries Phosphoserine. The [ST]-Q motif motif lies at 131–132 (SQ).

It belongs to the histone H2A family. As to quaternary structure, the nucleosome is a histone octamer containing two molecules each of H2A, H2B, H3 and H4 assembled in one H3-H4 heterotetramer and two H2A-H2B heterodimers. The octamer wraps approximately 147 bp of DNA. In terms of processing, phosphorylated to form H2AS128ph (gamma-H2A) in response to DNA double-strand breaks (DSBs) generated by exogenous genotoxic agents and by stalled replication forks. Phosphorylation is dependent on the DNA damage checkpoint kinases MEC1/ATR and TEL1/ATM, spreads on either side of a detected DSB site and may mark the surrounding chromatin for recruitment of proteins required for DNA damage signaling and repair. Gamma-H2A is removed from the DNA prior to the strand invasion-primer extension step of the repair process and subsequently dephosphorylated. Dephosphorylation is necessary for efficient recovery from the DNA damage checkpoint. Acetylated by ESA1 to form H2AK4ac and H2AK7ac.

The protein resides in the nucleus. The protein localises to the chromosome. In terms of biological role, core component of nucleosome which plays a central role in DNA double strand break (DSB) repair. Nucleosomes wrap and compact DNA into chromatin, limiting DNA accessibility to the cellular machineries which require DNA as a template. Histones thereby play a central role in transcription regulation, DNA repair, DNA replication and chromosomal stability. DNA accessibility is regulated via a complex set of post-translational modifications of histones, also called histone code, and nucleosome remodeling. The sequence is that of Histone H2A (HTA1) from Phaeosphaeria nodorum (strain SN15 / ATCC MYA-4574 / FGSC 10173) (Glume blotch fungus).